Here is a 30-residue protein sequence, read N- to C-terminus: Cyclotide hypa-A (30 aa).

A cross-link (cyclopeptide (Gly-Asn)) is located at residues 1 to 30; that stretch reads GIPCAESCVYIPCTITALLGCSCKNKVCYN. Disulfide bonds link C4–C21, C8–C23, and C13–C28.

In terms of processing, this is a cyclic peptide.

Probably participates in a plant defense mechanism. This chain is Cyclotide hypa-A, found in Pombalia parviflora (Violetilla).